The following is a 591-amino-acid chain: Solute carrier family 40 member 2, chloroplastic (591 aa).

A chloroplast-targeting transit peptide spans 1-66 (MGMVTATAAA…RCYITNVEVD (66 aa)). A run of 11 helical transmembrane segments spans residues 159-179 (WPAA…VGFF), 206-226 (GLNA…IYAM), 242-262 (WFIA…ALGV), 293-313 (LVCE…YHPV), 318-338 (IACG…QLIN), 391-411 (VATV…MTAL), 419-439 (PSIV…ATFI), 452-472 (AGAA…VVYW), 482-502 (LLIF…YDVV), 518-540 (LIGG…MAII), and 547-569 (FGFL…CQWL).

It belongs to the ferroportin (FP) (TC 2.A.100) family. SLC40A subfamily.

The protein resides in the membrane. Its subcellular location is the plastid. It localises to the chloroplast envelope. In terms of biological role, may be involved in iron transport and iron homeostasis. The polypeptide is Solute carrier family 40 member 2, chloroplastic (Oryza sativa subsp. japonica (Rice)).